The following is a 70-amino-acid chain: ATP synthase subunit c (70 aa).

2 consecutive transmembrane segments (helical) span residues 3 to 23 (ALAA…IGIA) and 44 to 64 (LFLI…VIAF).

The protein belongs to the ATPase C chain family. As to quaternary structure, F-type ATPases have 2 components, F(1) - the catalytic core - and F(0) - the membrane proton channel. F(1) has five subunits: alpha(3), beta(3), gamma(1), delta(1), epsilon(1). F(0) has three main subunits: a(1), b(2) and c(10-14). The alpha and beta chains form an alternating ring which encloses part of the gamma chain. F(1) is attached to F(0) by a central stalk formed by the gamma and epsilon chains, while a peripheral stalk is formed by the delta and b chains.

Its subcellular location is the cell membrane. Functionally, f(1)F(0) ATP synthase produces ATP from ADP in the presence of a proton or sodium gradient. F-type ATPases consist of two structural domains, F(1) containing the extramembraneous catalytic core and F(0) containing the membrane proton channel, linked together by a central stalk and a peripheral stalk. During catalysis, ATP synthesis in the catalytic domain of F(1) is coupled via a rotary mechanism of the central stalk subunits to proton translocation. Its function is as follows. Key component of the F(0) channel; it plays a direct role in translocation across the membrane. A homomeric c-ring of between 10-14 subunits forms the central stalk rotor element with the F(1) delta and epsilon subunits. This Caldicellulosiruptor bescii (strain ATCC BAA-1888 / DSM 6725 / KCTC 15123 / Z-1320) (Anaerocellum thermophilum) protein is ATP synthase subunit c.